The primary structure comprises 29 residues: Galanin (29 aa).

Alanine 29 carries the post-translational modification Alanine amide.

This sequence belongs to the galanin family.

The protein localises to the secreted. Functionally, contracts smooth muscle of the gastrointestinal and genitourinary tract, regulates growth hormone release, modulates insulin release, and may be involved in the control of adrenal secretion. This Oncorhynchus mykiss (Rainbow trout) protein is Galanin (gal).